Consider the following 198-residue polypeptide: Ribosome maturation factor RimM (198 aa).

The segment at 1–21 is disordered; that stretch reads MPPPTASTPDDSADPGPDFAD. Positions 122–195 constitute a PRC barrel domain; the sequence is DDELFADDLV…RIVVRPIDGL (74 aa).

The protein belongs to the RimM family. Binds ribosomal protein uS19.

The protein localises to the cytoplasm. Its function is as follows. An accessory protein needed during the final step in the assembly of 30S ribosomal subunit, possibly for assembly of the head region. Essential for efficient processing of 16S rRNA. May be needed both before and after RbfA during the maturation of 16S rRNA. It has affinity for free ribosomal 30S subunits but not for 70S ribosomes. This chain is Ribosome maturation factor RimM, found in Salinibacter ruber (strain DSM 13855 / M31).